Consider the following 245-residue polypeptide: Tyrosine recombinase XerD-like (245 aa).

Positions M1–Y72 constitute a Core-binding (CB) domain. Residues P90 to N245 enclose the Tyr recombinase domain. Residues K151 and R210 contribute to the active site. Y242 acts as the O-(3'-phospho-DNA)-tyrosine intermediate in catalysis.

The protein belongs to the 'phage' integrase family. XerD-like subfamily.

The protein localises to the cytoplasm. Functionally, putative tyrosine recombinase. Not involved in the cutting and rejoining of the recombining DNA molecules on dif(SL) site. In Streptococcus mutans serotype c (strain ATCC 700610 / UA159), this protein is Tyrosine recombinase XerD-like.